The sequence spans 352 residues: Probable RNA methyltransferase CV_2253 (352 aa).

The active-site Proton acceptor is the Glu-91. The region spanning 94 to 320 (LLPRDGLCVS…TKVRDSAGQD (227 aa)) is the Radical SAM core domain. Cys-101 and Cys-325 are disulfide-bonded. [4Fe-4S] cluster is bound by residues Cys-108, Cys-112, and Cys-115. S-adenosyl-L-methionine contacts are provided by residues 153–154 (GE), Ser-183, 206–208 (SLH), and Asn-282. The S-methylcysteine intermediate role is filled by Cys-325.

Belongs to the radical SAM superfamily. RlmN family. The cofactor is [4Fe-4S] cluster.

It localises to the cytoplasm. This chain is Probable RNA methyltransferase CV_2253, found in Chromobacterium violaceum (strain ATCC 12472 / DSM 30191 / JCM 1249 / CCUG 213 / NBRC 12614 / NCIMB 9131 / NCTC 9757 / MK).